The chain runs to 358 residues: tRNA-specific 2-thiouridylase MnmA (358 aa).

ATP is bound by residues 6 to 13 and I32; that span reads LVSGGVDS. The interaction with target base in tRNA stretch occupies residues 93–95; the sequence is NPD. The Nucleophile role is filled by C98. A disulfide bond links C98 and C193. G121 contributes to the ATP binding site. Positions 143 to 145 are interaction with tRNA; that stretch reads KDQ. Catalysis depends on C193, which acts as the Cysteine persulfide intermediate.

It belongs to the MnmA/TRMU family.

It localises to the cytoplasm. The catalysed reaction is S-sulfanyl-L-cysteinyl-[protein] + uridine(34) in tRNA + AH2 + ATP = 2-thiouridine(34) in tRNA + L-cysteinyl-[protein] + A + AMP + diphosphate + H(+). Catalyzes the 2-thiolation of uridine at the wobble position (U34) of tRNA, leading to the formation of s(2)U34. In Parabacteroides distasonis (strain ATCC 8503 / DSM 20701 / CIP 104284 / JCM 5825 / NCTC 11152), this protein is tRNA-specific 2-thiouridylase MnmA.